The primary structure comprises 348 residues: Tetraacyldisaccharide 4'-kinase (348 aa).

65 to 72 (VAGGAGKT) is an ATP binding site. The interval 89–117 (PGIVSRGHGSREREARPVSADSTAQSVGD) is disordered.

Belongs to the LpxK family.

It carries out the reaction a lipid A disaccharide + ATP = a lipid IVA + ADP + H(+). It participates in glycolipid biosynthesis; lipid IV(A) biosynthesis; lipid IV(A) from (3R)-3-hydroxytetradecanoyl-[acyl-carrier-protein] and UDP-N-acetyl-alpha-D-glucosamine: step 6/6. In terms of biological role, transfers the gamma-phosphate of ATP to the 4'-position of a tetraacyldisaccharide 1-phosphate intermediate (termed DS-1-P) to form tetraacyldisaccharide 1,4'-bis-phosphate (lipid IVA). This chain is Tetraacyldisaccharide 4'-kinase, found in Leptothrix cholodnii (strain ATCC 51168 / LMG 8142 / SP-6) (Leptothrix discophora (strain SP-6)).